Consider the following 474-residue polypeptide: Microtubule protein alp7 (474 aa).

The span at 1–20 (MSDIVSSSTDYSRRSPSSSS) shows a compositional bias: low complexity. Disordered stretches follow at residues 1 to 79 (MSDI…DTLN), 93 to 114 (KSFD…LSQH), and 164 to 223 (SLQT…NSTQ). Ser-17 is subject to Phosphoserine. A compositionally biased stretch (basic and acidic residues) spans 25–36 (ETDHTGFHEKRQ). Residues 66–76 (SKPNPQLNLKD) show a composition bias toward polar residues. 2 stretches are compositionally biased toward polar residues: residues 177–189 (SNGS…NTAP) and 201–223 (RNSA…NSTQ). Coiled-coil stretches lie at residues 219 to 273 (INST…QLRS) and 367 to 471 (KISN…LNLE).

As to quaternary structure, interacts with alp14.

The protein resides in the nucleus. The protein localises to the cytoplasm. Its subcellular location is the cytoskeleton. It is found in the spindle. It localises to the chromosome. The protein resides in the centromere. The protein localises to the kinetochore. Functionally, required for bipolar spindle formation and proper chromosome segregation. Has an indirect role in connecting the kinetochores and the plus end of pole to chromosome microtubules by targeting alp14 to the spindle pole body. Involved in the emergence of large microtubule organizing centers (MTOC) in interphase cells. Attaches to the minus ends of microtubules and associates with the sites of microtubule attachment on the nuclear envelope. This leads to the stabilization of the microtubule bundles. This Schizosaccharomyces pombe (strain 972 / ATCC 24843) (Fission yeast) protein is Microtubule protein alp7 (alp7).